We begin with the raw amino-acid sequence, 179 residues long: Large ribosomal subunit protein uL6 (179 aa).

The protein belongs to the universal ribosomal protein uL6 family. Part of the 50S ribosomal subunit.

Functionally, this protein binds to the 23S rRNA, and is important in its secondary structure. It is located near the subunit interface in the base of the L7/L12 stalk, and near the tRNA binding site of the peptidyltransferase center. The polypeptide is Large ribosomal subunit protein uL6 (Acidothermus cellulolyticus (strain ATCC 43068 / DSM 8971 / 11B)).